A 315-amino-acid chain; its full sequence is Cytochrome bo(3) ubiquinol oxidase subunit 2 (315 aa).

The signal sequence occupies residues 1–24 (MRLRKYNKSLGWLSLFAGTVLLSG). A lipid anchor (N-palmitoyl cysteine) is attached at Cys25. Residue Cys25 is the site of S-diacylglycerol cysteine attachment. The Periplasmic segment spans residues 25–50 (CNSALLDPKGQIGLEQRSLILTAFGL). A helical transmembrane segment spans residues 51–68 (MLIVVIPAILMAVGFAWK). Residues 69–92 (YRASNKDAKYSPNWSHSNKVEAVV) are Cytoplasmic-facing. A helical transmembrane segment spans residues 93-111 (WTVPILIIIFLAVLTWKTT). Residues 112–315 (HALEPSKPLA…MDMSHAESAH (204 aa)) are Periplasmic-facing. Positions 288 to 315 (MDMTQPEGEHSAHEGMEGMDMSHAESAH) are disordered. The span at 294–315 (EGEHSAHEGMEGMDMSHAESAH) shows a compositional bias: basic and acidic residues.

This sequence belongs to the cytochrome c oxidase subunit 2 family. In terms of assembly, heterooctamer of two A chains, two B chains, two C chains and two D chains.

Its subcellular location is the cell inner membrane. Cytochrome bo(3) ubiquinol terminal oxidase is the component of the aerobic respiratory chain of E.coli that predominates when cells are grown at high aeration. Has proton pump activity across the membrane in addition to electron transfer, pumping 2 protons/electron. The polypeptide is Cytochrome bo(3) ubiquinol oxidase subunit 2 (cyoA) (Escherichia coli O6:H1 (strain CFT073 / ATCC 700928 / UPEC)).